Reading from the N-terminus, the 125-residue chain is uncharacterized protein (125 aa).

Residues 36–57 (EAKKAKEKQDSKTKDTDKKVDQ) form a disordered region. The helical transmembrane segment at 92 to 112 (ITIFLLIVLVSAIMIGIYFGI) threads the bilayer.

It is found in the membrane. This is an uncharacterized protein from Mycoplasma pneumoniae (strain ATCC 29342 / M129 / Subtype 1) (Mycoplasmoides pneumoniae).